A 456-amino-acid chain; its full sequence is Probable flavin-containing monoamine oxidase A (456 aa).

C394 carries the S-8alpha-FAD cysteine modification.

This sequence belongs to the flavin monoamine oxidase family. FAD serves as cofactor.

It catalyses the reaction a secondary aliphatic amine + O2 + H2O = a primary amine + an aldehyde + H2O2. The polypeptide is Probable flavin-containing monoamine oxidase A (maoA) (Dictyostelium discoideum (Social amoeba)).